The chain runs to 226 residues: Putative DNA repair protein recA homolog 4 (226 aa).

An ATP-binding site is contributed by 41 to 48 (GPEASGKT).

Belongs to the RecA family.

It is found in the cytoplasm. In terms of biological role, involved in recombination ability and DNA strand transfer activity. The chain is Putative DNA repair protein recA homolog 4 from Arabidopsis thaliana (Mouse-ear cress).